Here is a 291-residue protein sequence, read N- to C-terminus: ATP synthase gamma chain (291 aa).

Belongs to the ATPase gamma chain family. F-type ATPases have 2 components, CF(1) - the catalytic core - and CF(0) - the membrane proton channel. CF(1) has five subunits: alpha(3), beta(3), gamma(1), delta(1), epsilon(1). CF(0) has three main subunits: a, b and c.

The protein localises to the cell inner membrane. In terms of biological role, produces ATP from ADP in the presence of a proton gradient across the membrane. The gamma chain is believed to be important in regulating ATPase activity and the flow of protons through the CF(0) complex. The protein is ATP synthase gamma chain of Cupriavidus metallidurans (strain ATCC 43123 / DSM 2839 / NBRC 102507 / CH34) (Ralstonia metallidurans).